A 1525-amino-acid polypeptide reads, in one-letter code: Dicer-like protein 1 (1525 aa).

The segment covering 37–52 (DLQEDDGSSDESDNDE) has biased composition (acidic residues). The disordered stretch occupies residues 37 to 65 (DLQEDDGSSDESDNDEREDHSKTGVSQQR). One can recognise a Helicase ATP-binding domain in the interval 124-305 (LFERAKVQNT…DEATRLEKLL (182 aa)). Position 137-144 (137-144 (LDTGSGKT)) interacts with ATP. The DEAH box motif lies at 250–253 (DEAH). Positions 439–605 (QLSPKVQVLR…SFCRTLPEDR (167 aa)) constitute a Helicase C-terminal domain. In terms of domain architecture, Dicer dsRNA-binding fold spans 641–731 (ATAILARYAS…NSIYHRRLPA (91 aa)). Positions 881 to 1009 (ESLTYVRDND…ICIEPLKVSA (129 aa)) constitute a PAZ domain. 2 consecutive RNase III domains span residues 1032–1192 (LISL…LSGG) and 1243–1394 (SRKI…VDSD). E1283, D1380, and E1383 together coordinate Mg(2+). In terms of domain architecture, DRBM spans 1428-1496 (TFLHNRLTNE…SEKALAVLDE (69 aa)). Zn(2+) is bound by residues C1440, H1467, C1508, and C1510.

This sequence belongs to the helicase family. Dicer subfamily. Requires Mg(2+) as cofactor. Mn(2+) is required as a cofactor.

Functionally, dicer-like endonuclease involved in cleaving double-stranded RNA in the RNA interference (RNAi) pathway. Produces 21 to 25 bp dsRNAs (siRNAs) which target the selective destruction of homologous RNAs leading to sequence-specific suppression of gene expression, called post-transcriptional gene silencing (PTGS). Part of a broad host defense response against viral infection and transposons. This is Dicer-like protein 1 (dcl1) from Aspergillus niger (strain ATCC MYA-4892 / CBS 513.88 / FGSC A1513).